A 155-amino-acid chain; its full sequence is Ribosomal RNA large subunit methyltransferase H (155 aa).

Residues Leu-72, Gly-103, and 122–127 (LSPLTL) each bind S-adenosyl-L-methionine.

It belongs to the RNA methyltransferase RlmH family. As to quaternary structure, homodimer.

The protein resides in the cytoplasm. It catalyses the reaction pseudouridine(1915) in 23S rRNA + S-adenosyl-L-methionine = N(3)-methylpseudouridine(1915) in 23S rRNA + S-adenosyl-L-homocysteine + H(+). Functionally, specifically methylates the pseudouridine at position 1915 (m3Psi1915) in 23S rRNA. The chain is Ribosomal RNA large subunit methyltransferase H from Pasteurella multocida (strain Pm70).